The following is a 365-amino-acid chain: 1-aminocyclopropane-1-carboxylate oxidase homolog 9 (365 aa).

The region spanning 214–313 (KGLLMLCHYY…RISVACFVSS (100 aa)) is the Fe2OG dioxygenase domain. 3 residues coordinate Fe cation: His238, Asp240, and His294. Arg304 serves as a coordination point for 2-oxoglutarate.

It belongs to the iron/ascorbate-dependent oxidoreductase family. Requires Fe(2+) as cofactor.

The sequence is that of 1-aminocyclopropane-1-carboxylate oxidase homolog 9 from Arabidopsis thaliana (Mouse-ear cress).